Consider the following 51-residue polypeptide: DNA-directed RNA polymerase subunit Rpo12 (51 aa).

Positions 14, 29, and 32 each coordinate Zn(2+).

This sequence belongs to the archaeal Rpo12/eukaryotic RPC10 RNA polymerase subunit family. As to quaternary structure, part of the RNA polymerase complex. Zn(2+) is required as a cofactor.

The protein resides in the cytoplasm. The enzyme catalyses RNA(n) + a ribonucleoside 5'-triphosphate = RNA(n+1) + diphosphate. Functionally, DNA-dependent RNA polymerase (RNAP) catalyzes the transcription of DNA into RNA using the four ribonucleoside triphosphates as substrates. This chain is DNA-directed RNA polymerase subunit Rpo12, found in Methanopyrus kandleri (strain AV19 / DSM 6324 / JCM 9639 / NBRC 100938).